The following is a 216-amino-acid chain: MRLDLYVITDGAIGGGRSHAEIARFACAGGADAIQLRDKACGPDALCRIGREIRAITRDTGTLFIVNDRLDVALACGADGVHLGQGDLRVDTARRLAPRPFMIGVSVGNAEEAISAVVAGADYVAASPIFATSSKDDAGPGCGISGLREIRAAVAVPVVAIGGITRDNVAEVIAGGADSIAVISAVVGQPDIVAAARDLRERITTAKEQYREKRDA.

4-amino-2-methyl-5-(diphosphooxymethyl)pyrimidine contacts are provided by residues 35–39 and Asn-67; that span reads QLRDK. Positions 68 and 87 each coordinate Mg(2+). Ser-106 is a binding site for 4-amino-2-methyl-5-(diphosphooxymethyl)pyrimidine. 132-134 lines the 2-[(2R,5Z)-2-carboxy-4-methylthiazol-5(2H)-ylidene]ethyl phosphate pocket; that stretch reads TSS. Lys-135 provides a ligand contact to 4-amino-2-methyl-5-(diphosphooxymethyl)pyrimidine. 2-[(2R,5Z)-2-carboxy-4-methylthiazol-5(2H)-ylidene]ethyl phosphate is bound by residues Gly-163 and 183 to 184; that span reads IS.

It belongs to the thiamine-phosphate synthase family. The cofactor is Mg(2+).

The enzyme catalyses 2-[(2R,5Z)-2-carboxy-4-methylthiazol-5(2H)-ylidene]ethyl phosphate + 4-amino-2-methyl-5-(diphosphooxymethyl)pyrimidine + 2 H(+) = thiamine phosphate + CO2 + diphosphate. It catalyses the reaction 2-(2-carboxy-4-methylthiazol-5-yl)ethyl phosphate + 4-amino-2-methyl-5-(diphosphooxymethyl)pyrimidine + 2 H(+) = thiamine phosphate + CO2 + diphosphate. The catalysed reaction is 4-methyl-5-(2-phosphooxyethyl)-thiazole + 4-amino-2-methyl-5-(diphosphooxymethyl)pyrimidine + H(+) = thiamine phosphate + diphosphate. Its pathway is cofactor biosynthesis; thiamine diphosphate biosynthesis; thiamine phosphate from 4-amino-2-methyl-5-diphosphomethylpyrimidine and 4-methyl-5-(2-phosphoethyl)-thiazole: step 1/1. Its function is as follows. Condenses 4-methyl-5-(beta-hydroxyethyl)thiazole monophosphate (THZ-P) and 2-methyl-4-amino-5-hydroxymethyl pyrimidine pyrophosphate (HMP-PP) to form thiamine monophosphate (TMP). The sequence is that of Thiamine-phosphate synthase from Methanoregula boonei (strain DSM 21154 / JCM 14090 / 6A8).